Reading from the N-terminus, the 1091-residue chain is Self-sufficient cytochrome P450 monooxygenase CYP505E1 (1091 aa).

Cys433 serves as a coordination point for heme. One can recognise a Flavodoxin-like domain in the interval 528–669; the sequence is ICFFYGSNSG…DLEAWEETSL (142 aa). FMN contacts are provided by residues 534 to 538 and 613 to 645; these read SNSGT and VFGCGHHDWTQTFYRIPTLIDELMHKAGATRLA. Residues 707-935 enclose the FAD-binding FR-type domain; sequence KDLMEARVTT…RPAKEAFHLP (229 aa).

It in the N-terminal section; belongs to the cytochrome P450 family. Requires FAD as cofactor. It depends on FMN as a cofactor. Heme serves as cofactor.

The catalysed reaction is 2 oxidized [cytochrome P450] + NADPH = 2 reduced [cytochrome P450] + NADP(+) + H(+). It catalyses the reaction an organic molecule + reduced [NADPH--hemoprotein reductase] + O2 = an alcohol + oxidized [NADPH--hemoprotein reductase] + H2O + H(+). The enzyme catalyses dodecanoate + reduced [NADPH--hemoprotein reductase] + O2 = 5-hydroxydodecanoate + oxidized [NADPH--hemoprotein reductase] + H2O + H(+). It carries out the reaction tetradecanoate + reduced [NADPH--hemoprotein reductase] + O2 = 7-hydroxytetradecanoate + oxidized [NADPH--hemoprotein reductase] + H2O + H(+). The catalysed reaction is dodecan-1-ol + reduced [NADPH--hemoprotein reductase] + O2 = 1,5-dodecanediol + oxidized [NADPH--hemoprotein reductase] + H2O + H(+). It catalyses the reaction dodecan-1-ol + reduced [NADPH--hemoprotein reductase] + O2 = 1,4-dodecanediol + oxidized [NADPH--hemoprotein reductase] + H2O + H(+). The enzyme catalyses dodecan-1-ol + reduced [NADPH--hemoprotein reductase] + O2 = 1,6-dodecanediol + oxidized [NADPH--hemoprotein reductase] + H2O + H(+). Functionally, self-sufficient cytochrome P450 monooxygenase that catalyzes the regioselective in-chain hydroxylation of alkanes, fatty alcohols, and fatty acids at the omega-7 position. Performs hydroxylation of C10-C16 n-alkanes and C12 and C14 fatty alcohols; and thereby enables the one step biocatalytic synthesis of rare alcohols such as 5-dodecanol and 7-tetradecanol. Converts 1-dodecanol into 1,5-dodecanediol as major product with very little sub-terminally hydroxylated products with the 1,4-dodecanediol and 1,6-dodecanediol more abundant. Converts dodecanoic acid to 5-hydroxydodecanoic acid which can be further converted into delta-dodecalactone by lactonization of the 5-hydroxy acid at low pH. Also gives sub-terminal hydroxylation of dodecanoic acid with 9-hydroxydodecanoic acid being the second most abundant product. In Aspergillus niger (strain ATCC MYA-4892 / CBS 513.88 / FGSC A1513), this protein is Self-sufficient cytochrome P450 monooxygenase CYP505E1.